Here is a 163-residue protein sequence, read N- to C-terminus: Peptide deformylase 3 (163 aa).

2 residues coordinate Fe cation: cysteine 91 and histidine 133. Glutamate 134 is a catalytic residue. Residue histidine 137 participates in Fe cation binding.

The protein belongs to the polypeptide deformylase family. The cofactor is Fe(2+).

The catalysed reaction is N-terminal N-formyl-L-methionyl-[peptide] + H2O = N-terminal L-methionyl-[peptide] + formate. Its function is as follows. Removes the formyl group from the N-terminal Met of newly synthesized proteins. Requires at least a dipeptide for an efficient rate of reaction. N-terminal L-methionine is a prerequisite for activity but the enzyme has broad specificity at other positions. This is Peptide deformylase 3 from Shewanella oneidensis (strain ATCC 700550 / JCM 31522 / CIP 106686 / LMG 19005 / NCIMB 14063 / MR-1).